We begin with the raw amino-acid sequence, 510 residues long: NAD(P)H-quinone oxidoreductase subunit 2 A, chloroplastic (510 aa).

The next 13 membrane-spanning stretches (helical) occupy residues 24–44 (LLLF…GLIL), 57–77 (IPWL…ALLF), 99–119 (IFQF…VEYI), 124–144 (MAIT…MFLC), 149–169 (LITI…LSGY), 183–203 (YLLM…WLYG), 227–247 (PGIS…LSLA), 295–315 (WHLL…LIAI), 323–343 (MLAY…IVGD), 354–374 (YMLF…SFGL), 395–415 (ALSL…AGFF), 418–438 (LHLF…IGLL), and 484–504 (MIVC…IIAI).

Belongs to the complex I subunit 2 family. In terms of assembly, NDH is composed of at least 16 different subunits, 5 of which are encoded in the nucleus.

The protein resides in the plastid. It localises to the chloroplast thylakoid membrane. The enzyme catalyses a plastoquinone + NADH + (n+1) H(+)(in) = a plastoquinol + NAD(+) + n H(+)(out). It catalyses the reaction a plastoquinone + NADPH + (n+1) H(+)(in) = a plastoquinol + NADP(+) + n H(+)(out). NDH shuttles electrons from NAD(P)H:plastoquinone, via FMN and iron-sulfur (Fe-S) centers, to quinones in the photosynthetic chain and possibly in a chloroplast respiratory chain. The immediate electron acceptor for the enzyme in this species is believed to be plastoquinone. Couples the redox reaction to proton translocation, and thus conserves the redox energy in a proton gradient. This Ranunculus macranthus (Large buttercup) protein is NAD(P)H-quinone oxidoreductase subunit 2 A, chloroplastic.